The sequence spans 269 residues: Hydroxyethylthiazole kinase (269 aa).

Position 42 (Met42) interacts with substrate. The ATP site is built by Arg118 and Ser164. Gly191 serves as a coordination point for substrate.

The protein belongs to the Thz kinase family. Mg(2+) is required as a cofactor.

It carries out the reaction 5-(2-hydroxyethyl)-4-methylthiazole + ATP = 4-methyl-5-(2-phosphooxyethyl)-thiazole + ADP + H(+). It functions in the pathway cofactor biosynthesis; thiamine diphosphate biosynthesis; 4-methyl-5-(2-phosphoethyl)-thiazole from 5-(2-hydroxyethyl)-4-methylthiazole: step 1/1. Functionally, catalyzes the phosphorylation of the hydroxyl group of 4-methyl-5-beta-hydroxyethylthiazole (THZ). The sequence is that of Hydroxyethylthiazole kinase from Listeria monocytogenes serotype 4a (strain HCC23).